Here is a 304-residue protein sequence, read N- to C-terminus: ATP phosphoribosyltransferase (304 aa).

It belongs to the ATP phosphoribosyltransferase family.

The protein resides in the cytoplasm. It carries out the reaction 1-(5-phospho-beta-D-ribosyl)-ATP + diphosphate = 5-phospho-alpha-D-ribose 1-diphosphate + ATP. It participates in amino-acid biosynthesis; L-histidine biosynthesis; L-histidine from 5-phospho-alpha-D-ribose 1-diphosphate: step 1/9. Its function is as follows. Catalyzes the condensation of ATP and 5-phosphoribose 1-diphosphate to form N'-(5'-phosphoribosyl)-ATP (PR-ATP). Has a crucial role in the pathway because the rate of histidine biosynthesis seems to be controlled primarily by regulation of the enzymatic activity. The polypeptide is ATP phosphoribosyltransferase (HIS1) (Debaryomyces hansenii (strain ATCC 36239 / CBS 767 / BCRC 21394 / JCM 1990 / NBRC 0083 / IGC 2968) (Yeast)).